A 117-amino-acid chain; its full sequence is Large ribosomal subunit protein bL19 (117 aa).

This sequence belongs to the bacterial ribosomal protein bL19 family.

This protein is located at the 30S-50S ribosomal subunit interface and may play a role in the structure and function of the aminoacyl-tRNA binding site. In Shewanella frigidimarina (strain NCIMB 400), this protein is Large ribosomal subunit protein bL19.